We begin with the raw amino-acid sequence, 2907 residues long: Fibrillin-2 (2907 aa).

The N-terminal stretch at 1–28 (MGRRRRLCLQPYFVWLGCVALWAQGTDG) is a signal peptide. Residues 26 to 58 (TDGQPQPPPPKTLRPQPPPQQVRPAVAGSEGGF) form a disordered region. A propeptide spanning residues 29 to 77 (QPQPPPPKTLRPQPPPQQVRPAVAGSEGGFMGPEYRDEGAVAASRVRRR) is cleaved from the precursor. The span at 30-46 (PQPPPPKTLRPQPPPQQ) shows a compositional bias: pro residues. 3 EGF-like domains span residues 111–142 (IVPI…PTCG), 145–176 (SIQQ…TYCG), and 176–208 (GQPV…PQCE). 9 disulfide bridges follow: cysteine 115–cysteine 124, cysteine 119–cysteine 130, cysteine 132–cysteine 141, cysteine 149–cysteine 159, cysteine 153–cysteine 164, cysteine 166–cysteine 175, cysteine 180–cysteine 190, cysteine 184–cysteine 196, and cysteine 198–cysteine 207. An interaction with MFAP4 region spans residues 149–359 (CSVRCMNGGT…VTSTDGSRCI (211 aa)). A TB 1 domain is found at 214 to 266 (GPCFTQVNNQMCQGQLTGIVCTKTLCCATIGRAWGHPCEMCPAQPQPCRRGFI). In terms of domain architecture, EGF-like 4; calcium-binding spans 276–317 (DVDECQAIPGLCQGGNCINTVGSFECRCPAGHKQSETTQKCE). Cystine bridges form between cysteine 280–cysteine 292, cysteine 287–cysteine 301, cysteine 303–cysteine 316, cysteine 322–cysteine 334, cysteine 329–cysteine 343, and cysteine 345–cysteine 358. O-linked (Glc) serine glycosylation occurs at serine 298. Positions 318 to 359 (DIDECSVIPGVCETGDCSNTVGSYFCLCPRGFVTSTDGSRCI) constitute an EGF-like 5; calcium-binding domain. An O-linked (Glc) serine glycan is attached at serine 340. The TB 2 domain maps to 364–417 (GTCFSGLVNGRCAQELPGRMAKAQCCCEPGRCWSIGTIPEACPVRGSEEYRRLC). The N-linked (GlcNAc...) asparagine glycan is linked to asparagine 485. Residues 487 to 527 (TIDICKHHANLCLNGRCIPTVSSYRCECNMGYKQDANGDCI) enclose the EGF-like 6 domain. 15 disulfide bridges follow: cysteine 491–cysteine 503, cysteine 498–cysteine 512, cysteine 514–cysteine 526, cysteine 532–cysteine 542, cysteine 537–cysteine 551, cysteine 553–cysteine 566, cysteine 572–cysteine 584, cysteine 579–cysteine 593, cysteine 595–cysteine 608, cysteine 614–cysteine 625, cysteine 620–cysteine 634, cysteine 636–cysteine 649, cysteine 655–cysteine 666, cysteine 661–cysteine 675, and cysteine 677–cysteine 690. An O-linked (Glc) serine glycan is attached at serine 509. The EGF-like 7; calcium-binding domain maps to 528 to 567 (DVDECTSNPCSNGDCVNTPGSYYCKCHAGFQRTPTKQACI). O-linked (Glc) serine glycosylation occurs at serine 548. In terms of domain architecture, EGF-like 8; calcium-binding spans 568-609 (DIDECIQNGVLCKNGRCVNTDGSFQCICNAGFELTTDGKNCV). Serine 590 carries O-linked (Glc) serine glycosylation. One can recognise an EGF-like 9; calcium-binding domain in the interval 610–650 (DHDECTTTNMCLNGMCINEDGSFKCVCKPGFILAPNGRYCT). Residue serine 631 is glycosylated (O-linked (Glc) serine). Positions 651–691 (DVDECQTPGICMNGHCINNEGSFRCDCPPGLAVGVDGRVCV) constitute an EGF-like 10; calcium-binding domain. An O-linked (Glc) serine glycan is attached at serine 672. Positions 697–749 (STCYGEIKKGVCVRPFPGAVTKSECCCANPDYGFGEPCQPCPAKNSAEFHGLC) constitute a TB 3 domain. Residues 761 to 802 (DINECALDPDICANGICENLRGSYRCNCNSGYEPDASGRNCI) form the EGF-like 11; calcium-binding domain. Intrachain disulfides connect cysteine 765-cysteine 777, cysteine 772-cysteine 786, cysteine 788-cysteine 801, cysteine 807-cysteine 819, cysteine 814-cysteine 828, cysteine 830-cysteine 843, cysteine 849-cysteine 859, cysteine 854-cysteine 868, and cysteine 870-cysteine 883. Residues 803-844 (DIDECLVNRLLCDNGLCRNTPGSYSCTCPPGYVFRTETETCE) form the EGF-like 12; calcium-binding domain. An O-linked (Glc) serine glycan is attached at serine 825. The EGF-like 13; calcium-binding domain occupies 845 to 883 (DVNECESNPCVNGACRNNLGSFHCECSPGSKLSSTGLIC). The O-linked (Glc) serine glycan is linked to serine 865. Positions 889 to 940 (GTCWLNIQDNRCEVNINGATLKSECCATLGAAWGSPCERCELDAACPRGFAR) constitute a TB 4 domain. In terms of domain architecture, EGF-like 14; calcium-binding spans 948–989 (DVNECEVFPGVCPNGRCVNSKGSFHCECPEGLTLDGTGRVCL). 3 disulfides stabilise this stretch: cysteine 952/cysteine 964, cysteine 959/cysteine 973, and cysteine 975/cysteine 988. O-linked (Glc) serine glycosylation occurs at serine 970. Residues 994–1045 (EHCFLKWDEDECIHPVPGKFRMDACCCAVGAAWGTECEECPKPGTKEYETLC) form the TB 5 domain. The 42-residue stretch at 1066 to 1107 (DINECKAFPGMCTYGKCRNTIGSFKCRCNNGFALDMEERNCT) folds into the EGF-like 15; calcium-binding domain. 36 disulfide bridges follow: cysteine 1070–cysteine 1082, cysteine 1077–cysteine 1091, cysteine 1093–cysteine 1106, cysteine 1112–cysteine 1124, cysteine 1119–cysteine 1133, cysteine 1135–cysteine 1149, cysteine 1155–cysteine 1167, cysteine 1162–cysteine 1176, cysteine 1178–cysteine 1191, cysteine 1197–cysteine 1209, cysteine 1204–cysteine 1218, cysteine 1220–cysteine 1233, cysteine 1239–cysteine 1250, cysteine 1246–cysteine 1259, cysteine 1261–cysteine 1274, cysteine 1280–cysteine 1292, cysteine 1287–cysteine 1301, cysteine 1303–cysteine 1316, cysteine 1322–cysteine 1334, cysteine 1329–cysteine 1343, cysteine 1345–cysteine 1358, cysteine 1364–cysteine 1377, cysteine 1371–cysteine 1386, cysteine 1388–cysteine 1399, cysteine 1405–cysteine 1418, cysteine 1412–cysteine 1427, cysteine 1429–cysteine 1440, cysteine 1446–cysteine 1458, cysteine 1453–cysteine 1467, cysteine 1469–cysteine 1482, cysteine 1488–cysteine 1499, cysteine 1494–cysteine 1508, cysteine 1510–cysteine 1523, cysteine 1529–cysteine 1540, cysteine 1535–cysteine 1549, and cysteine 1551–cysteine 1564. Serine 1088 carries O-linked (Glc) serine glycosylation. Asparagine 1105 carries an N-linked (GlcNAc...) asparagine glycan. Positions 1108–1150 (DIDECRISPDLCGSGICVNTPGSFECECFEGYESGFMMMKNCM) constitute an EGF-like 16; calcium-binding domain. An EGF-like 17; calcium-binding domain is found at 1151–1192 (DIDECERNPLLCRGGTCVNTEGSFQCDCPLGHELSPSREDCV). O-linked (Glc) serine glycosylation is present at serine 1173. One can recognise an EGF-like 18; calcium-binding domain in the interval 1193 to 1234 (DINECSLSDNLCRNGKCVNMIGTYQCSCNPGYQATPDRQGCT). Threonine 1215 carries O-linked (Glc) threonine glycosylation. Residues 1235–1275 (DIDECMIMNGGCDTQCTNSEGSYECSCSEGYALMPDGRSCA) form the EGF-like 19; calcium-binding domain. Residue serine 1256 is glycosylated (O-linked (Glc) serine). Positions 1276-1317 (DIDECENNPDICDGGQCTNIPGEYRCLCYDGFMASMDMKTCI) constitute an EGF-like 20; calcium-binding domain. Residues 1318 to 1359 (DVNECDLNPNICMFGECENTKGSFICHCQLGYSVKKGTTGCT) form the EGF-like 21; calcium-binding domain. Residue serine 1340 is glycosylated (O-linked (Glc) serine). The region spanning 1360 to 1400 (DVDECEIGAHNCDMHASCLNVPGSFKCSCREGWVGNGIKCI) is the EGF-like 22; calcium-binding domain. Serine 1383 is a glycosylation site (O-linked (Glc) serine). Residues 1401-1441 (DLDECANGTHQCSINAQCVNTPGSYRCACSEGFTGDGFTCS) enclose the EGF-like 23; calcium-binding domain. The N-linked (GlcNAc...) asparagine glycan is linked to asparagine 1407. The 42-residue stretch at 1442-1483 (DVDECAENTNLCENGQCLNVPGAYRCECEMGFTPASDSRSCQ) folds into the EGF-like 24; calcium-binding domain. The EGF-like 25; calcium-binding domain occupies 1484-1524 (DIDECSFQNICVFGTCNNLPGMFHCICDDGYELDRTGGNCT). Asparagine 1522 carries an N-linked (GlcNAc...) asparagine glycan. The EGF-like 26; calcium-binding domain occupies 1525 to 1565 (DIDECADPINCVNGLCVNTPGRYECNCPPDFQLNPTGVGCV). The region spanning 1570–1626 (GNCYLKFGPRGDGSLSCNTEVGVGVSRSSCCCSLGKAWGNPCETCPPVNSTEYYTLC) is the TB 6 domain. Asparagine 1618 is a glycosylation site (N-linked (GlcNAc...) asparagine). Positions 1643–1684 (DIDECQELPGLCQGGNCINTFGSFQCECPQGYYLSEETRICE) constitute an EGF-like 27; calcium-binding domain. 6 cysteine pairs are disulfide-bonded: cysteine 1647/cysteine 1659, cysteine 1654/cysteine 1668, cysteine 1670/cysteine 1683, cysteine 1689/cysteine 1701, cysteine 1696/cysteine 1710, and cysteine 1712/cysteine 1725. O-linked (Glc) serine glycosylation occurs at serine 1665. The region spanning 1685–1726 (DIDECFAHPGVCGPGTCYNTLGNYTCICPPEYMQVNGGHNCM) is the EGF-like 28; calcium-binding domain. Asparagine 1707 carries N-linked (GlcNAc...) asparagine glycosylation. The segment at 1728 to 2164 (MRKSFCYRSY…VPSLHDTRED (437 aa)) is interaction with MFAP4. Residues 1731-1784 (SFCYRSYNGTTCENELPFNVTKRMCCCTYNVGKAWNKPCEPCPTPGTADFKTIC) form the TB 7 domain. Residues asparagine 1738 and asparagine 1749 are each glycosylated (N-linked (GlcNAc...) asparagine). Residues 1801 to 1842 (DIDECKEIPGICANGVCINQIGSFRCECPTGFSYNDLLLVCE) form the EGF-like 29; calcium-binding domain. 21 disulfide bridges follow: cysteine 1805–cysteine 1817, cysteine 1812–cysteine 1826, cysteine 1828–cysteine 1841, cysteine 1847–cysteine 1860, cysteine 1854–cysteine 1869, cysteine 1871–cysteine 1883, cysteine 1889–cysteine 1901, cysteine 1896–cysteine 1910, cysteine 1912–cysteine 1925, cysteine 1931–cysteine 1941, cysteine 1936–cysteine 1950, cysteine 1952–cysteine 1964, cysteine 1970–cysteine 1983, cysteine 1978–cysteine 1992, cysteine 1994–cysteine 2007, cysteine 2013–cysteine 2025, cysteine 2020–cysteine 2034, cysteine 2036–cysteine 2047, cysteine 2053–cysteine 2065, cysteine 2060–cysteine 2074, and cysteine 2076–cysteine 2089. The EGF-like 30; calcium-binding domain occupies 1843–1884 (DIDECSNGDNLCQRNADCINSPGSYRCECAAGFKLSPNGACV). Residue serine 1866 is glycosylated (O-linked (Glc) serine). Residues 1885-1926 (DRNECLEIPNVCSHGLCVDLQGSYQCICNNGFKASQDQTMCM) enclose the EGF-like 31; calcium-binding domain. Positions 1927 to 1965 (DVDECERHPCGNGTCKNTVGSYNCLCYPGFELTHNNDCL) constitute an EGF-like 32; calcium-binding domain. A glycan (N-linked (GlcNAc...) asparagine) is linked at asparagine 1938. O-linked (Glc) serine glycosylation occurs at serine 1947. The EGF-like 33; calcium-binding domain maps to 1966–2008 (DIDECSSFFGQVCRNGRCFNEIGSFKCLCNEGYELTPDGKNCI). O-linked (Glc) serine glycosylation occurs at serine 1989. The region spanning 2009–2048 (DTNECVALPGSCSPGTCQNLEGSFRCICPPGYEVRSENCI) is the EGF-like 34; calcium-binding domain. The region spanning 2049-2090 (DINECDEDPNICLFGSCTNTPGGFQCICPPGFVLSDNGRRCF) is the EGF-like 35; calcium-binding domain. The TB 8 domain occupies 2095 to 2148 (SFCFTNFENGKCSVPKAFNTTKAKCCCSKMPGEGWGDPCELCPKDDEVAFQDLC). Asparagine 2113 is a glycosylation site (N-linked (GlcNAc...) asparagine). In terms of domain architecture, EGF-like 36; calcium-binding spans 2164–2205 (DVNECLESPGICSNGQCINTDGSFRCECPMGYNLDYTGVRCV). 15 cysteine pairs are disulfide-bonded: cysteine 2168–cysteine 2180, cysteine 2175–cysteine 2189, cysteine 2191–cysteine 2204, cysteine 2210–cysteine 2221, cysteine 2216–cysteine 2230, cysteine 2232–cysteine 2244, cysteine 2250–cysteine 2261, cysteine 2257–cysteine 2270, cysteine 2272–cysteine 2285, cysteine 2291–cysteine 2305, cysteine 2298–cysteine 2314, cysteine 2316–cysteine 2329, cysteine 2335–cysteine 2347, cysteine 2342–cysteine 2356, and cysteine 2358–cysteine 2371. Serine 2186 carries an O-linked (Glc) serine glycan. One can recognise an EGF-like 37; calcium-binding domain in the interval 2206–2245 (DTDECSIGNPCGNGTCTNVIGSFECTCNEGFEPGPMMNCE). Asparagine 2218 carries an N-linked (GlcNAc...) asparagine glycan. The EGF-like 38; calcium-binding domain maps to 2246 to 2286 (DINECAQNPLLCAFRCMNTFGSYECTCPVGYALREDQKMCK). Serine 2267 is a glycosylation site (O-linked (Glc) serine). The EGF-like 39; calcium-binding domain occupies 2287–2330 (DLDECAEGLHDCESRGMMCKNLIGTFMCICPPGMARRPDGEGCV). The EGF-like 40; calcium-binding domain maps to 2331-2372 (DENECRTKPGICENGRCVNIIGSYRCECNEGFQSSSSGTECL). A glycan (O-linked (Glc) serine) is linked at serine 2353. One can recognise a TB 9 domain in the interval 2377–2430 (GLCFAEVLQTMCQMASSSRNLVTKSECCCDGGRGWGHQCELCPLPGTAQYKKIC). An EGF-like 41; calcium-binding domain is found at 2442–2483 (DIDECKVMPSLCTNGQCVNTMGSFRCFCKVGYTTDISGTACV). 21 cysteine pairs are disulfide-bonded: cysteine 2446/cysteine 2458, cysteine 2453/cysteine 2467, cysteine 2469/cysteine 2482, cysteine 2488/cysteine 2499, cysteine 2495/cysteine 2508, cysteine 2510/cysteine 2523, cysteine 2529/cysteine 2540, cysteine 2536/cysteine 2549, cysteine 2551/cysteine 2562, cysteine 2568/cysteine 2581, cysteine 2575/cysteine 2590, cysteine 2592/cysteine 2605, cysteine 2611/cysteine 2621, cysteine 2617/cysteine 2630, cysteine 2632/cysteine 2645, cysteine 2651/cysteine 2662, cysteine 2657/cysteine 2671, cysteine 2673/cysteine 2686, cysteine 2692/cysteine 2703, cysteine 2699/cysteine 2712, and cysteine 2714/cysteine 2726. The O-linked (Glc) serine glycan is linked to serine 2464. Positions 2484–2524 (DLDECSQSPKPCNFICKNTKGSYQCSCPRGYVLQEDGKTCK) constitute an EGF-like 42; calcium-binding domain. Serine 2505 carries O-linked (Glc) serine glycosylation. One can recognise an EGF-like 43; calcium-binding domain in the interval 2525–2563 (DLDECQTKQHNCQFLCVNTLGGFTCKCPPGFTQHHTACI). An EGF-like 44; calcium-binding domain is found at 2564-2606 (DNNECGSQPSLCGAKGICQNTPGSFSCECQRGFSLDASGLNCE). A glycan (O-linked (Glc) serine) is linked at serine 2587. Positions 2607 to 2646 (DVDECDGNHRCQHGCQNILGGYRCGCPQGYVQHYQWNQCV) constitute an EGF-like 45; calcium-binding domain. An EGF-like 46; calcium-binding domain is found at 2647-2687 (DENECSNPGACGSASCYNTLGSYKCACPSGFSFDQFSSACH). Serine 2668 carries an O-linked (Glc) serine glycan. The EGF-like 47; calcium-binding domain maps to 2688 to 2727 (DVNECSSSKNPCSYGCSNTEGGYLCGCPPGYFRVGQGHCV). Asparagine 2803 carries N-linked (GlcNAc...) asparagine glycosylation.

This sequence belongs to the fibrillin family. As to quaternary structure, interacts with BMP2, BMP4, BMP7, BMP10 and GDF5. Interacts with MFAP2 and MFAP5. Interacts with ADAMTSL5. Interacts with MFAP4. N-glycosylated. In terms of processing, O-glycosylated on serine residues by POGLUT2 and POGLUT3. As to expression, widely expressed.

It is found in the secreted. The protein localises to the extracellular space. Its subcellular location is the extracellular matrix. Functionally, fibrillins are structural components of 10-12 nm extracellular calcium-binding microfibrils, which occur either in association with elastin or in elastin-free bundles. Fibrillin-2-containing microfibrils regulate the early process of elastic fiber assembly. Regulates osteoblast maturation by controlling TGF-beta bioavailability and calibrating TGF-beta and BMP levels, respectively. Its function is as follows. Hormone secreted by trophoblasts that promotes trophoblast invasiveness. Has glucogenic activity: is able to increase plasma glucose levels. The polypeptide is Fibrillin-2 (Mus musculus (Mouse)).